The chain runs to 342 residues: Ketol-acid reductoisomerase (NADP(+)) (342 aa).

The KARI N-terminal Rossmann domain maps to 2 to 182 (AKIYYDDDAD…GGLRAGGIET (181 aa)). NADP(+)-binding positions include 25–28 (YGSQ), arginine 48, serine 51, serine 53, and 83–86 (DQNQ). Histidine 108 is an active-site residue. Glycine 134 lines the NADP(+) pocket. The region spanning 183–328 (SFREETETDL…KELRKMYSWL (146 aa)) is the KARI C-terminal knotted domain. Residues aspartate 191, glutamate 195, glutamate 227, and glutamate 231 each contribute to the Mg(2+) site. Serine 252 lines the substrate pocket.

This sequence belongs to the ketol-acid reductoisomerase family. It depends on Mg(2+) as a cofactor.

It catalyses the reaction (2R)-2,3-dihydroxy-3-methylbutanoate + NADP(+) = (2S)-2-acetolactate + NADPH + H(+). The enzyme catalyses (2R,3R)-2,3-dihydroxy-3-methylpentanoate + NADP(+) = (S)-2-ethyl-2-hydroxy-3-oxobutanoate + NADPH + H(+). The protein operates within amino-acid biosynthesis; L-isoleucine biosynthesis; L-isoleucine from 2-oxobutanoate: step 2/4. It participates in amino-acid biosynthesis; L-valine biosynthesis; L-valine from pyruvate: step 2/4. Functionally, involved in the biosynthesis of branched-chain amino acids (BCAA). Catalyzes an alkyl-migration followed by a ketol-acid reduction of (S)-2-acetolactate (S2AL) to yield (R)-2,3-dihydroxy-isovalerate. In the isomerase reaction, S2AL is rearranged via a Mg-dependent methyl migration to produce 3-hydroxy-3-methyl-2-ketobutyrate (HMKB). In the reductase reaction, this 2-ketoacid undergoes a metal-dependent reduction by NADPH to yield (R)-2,3-dihydroxy-isovalerate. This is Ketol-acid reductoisomerase (NADP(+)) from Cutibacterium acnes (strain DSM 16379 / KPA171202) (Propionibacterium acnes).